The chain runs to 322 residues: Adenine deaminase (322 aa).

Zn(2+) contacts are provided by H11, H13, and H189. The active-site Proton donor is the E192. D270 contributes to the Zn(2+) binding site. D271 contacts substrate.

This sequence belongs to the metallo-dependent hydrolases superfamily. Adenosine and AMP deaminases family. Adenine deaminase type 2 subfamily. Requires Zn(2+) as cofactor.

It catalyses the reaction adenine + H2O + H(+) = hypoxanthine + NH4(+). Catalyzes the hydrolytic deamination of adenine to hypoxanthine. Plays an important role in the purine salvage pathway and in nitrogen catabolism. The protein is Adenine deaminase of Rhizobium rhizogenes (strain K84 / ATCC BAA-868) (Agrobacterium radiobacter).